A 211-amino-acid polypeptide reads, in one-letter code: WAP four-disulfide core domain protein 1 (211 aa).

Positions 1-23 (MGNCGRKVLRALSFLLLLGSSSA) are cleaved as a signal peptide. A WAP domain is found at 50 to 99 (RQPHADRCPPPPRTLPPGACQATRCQADSECPRHRRCCYNGCAYACLEAV). 4 disulfide bridges follow: Cys57-Cys87, Cys69-Cys91, Cys74-Cys86, and Cys80-Cys95. Positions 182–198 (VLRQRLHKEYPEGDSKN) are enriched in basic and acidic residues. The tract at residues 182 to 211 (VLRQRLHKEYPEGDSKNVAEPGKGQQRHFP) is disordered.

Its subcellular location is the secreted. In terms of biological role, has growth inhibitory activity. The chain is WAP four-disulfide core domain protein 1 (Wfdc1) from Mus musculus (Mouse).